The following is a 579-amino-acid chain: Peptidyl-prolyl cis-trans isomerase-like 2 (579 aa).

Residues 42–115 enclose the U-box domain; that stretch reads RRLPFNFCSL…GEYVDPVTYK (74 aa). The tract at residues 227 to 261 is disordered; the sequence is AERAQRAESGAASKGLTKPGMSATAASQKTVSHQA. A compositionally biased stretch (polar residues) spans 250–259; that stretch reads TAASQKTVSH. A PPIase cyclophilin-type domain is found at 311-470; the sequence is QKGYARISTT…PDIRIKDVTI (160 aa). A disordered region spans residues 555-579; the sequence is EGPEPEPAKKKFKGGGGFGDFSSWD.

This sequence belongs to the cyclophilin-type PPIase family. PPIL2 subfamily.

It localises to the nucleus. It carries out the reaction [protein]-peptidylproline (omega=180) = [protein]-peptidylproline (omega=0). The catalysed reaction is S-ubiquitinyl-[E2 ubiquitin-conjugating enzyme]-L-cysteine + [acceptor protein]-L-lysine = [E2 ubiquitin-conjugating enzyme]-L-cysteine + N(6)-ubiquitinyl-[acceptor protein]-L-lysine.. The protein operates within protein modification; protein ubiquitination. Its function is as follows. May catalyze the cis-trans isomerization of proline imidic peptide bonds in oligopeptides thereby assisting the folding of proteins. May also function as a chaperone, playing a role in intracellular transport of proteins. May also have a protein ubiquitin ligase activity acting as an E3 ubiquitin protein ligase or as a ubiquitin-ubiquitin ligase promoting elongation of ubiquitin chains on proteins. The chain is Peptidyl-prolyl cis-trans isomerase-like 2 (cyp8) from Aspergillus fumigatus (strain ATCC MYA-4609 / CBS 101355 / FGSC A1100 / Af293) (Neosartorya fumigata).